The sequence spans 115 residues: Hydrogenase maturation factor HypA (115 aa).

Ni(2+) is bound at residue His-2. Zn(2+) contacts are provided by Cys-73, Cys-76, Cys-89, and Cys-92.

The protein belongs to the HypA/HybF family.

Its function is as follows. Involved in the maturation of [NiFe] hydrogenases. Required for nickel insertion into the metal center of the hydrogenase. The chain is Hydrogenase maturation factor HypA from Parabacteroides distasonis (strain ATCC 8503 / DSM 20701 / CIP 104284 / JCM 5825 / NCTC 11152).